The primary structure comprises 408 residues: Substance-P receptor (408 aa).

Residues 1 to 32 (MNSNISAQNDSALNSTIQNGTKINQFIQPPWQ) are Extracellular-facing. Asn-4, Asn-9, Asn-14, and Asn-19 each carry an N-linked (GlcNAc...) asparagine glycan. The helical transmembrane segment at 33–55 (IALWSVAYSIIVIVSLVGNIIVM) threads the bilayer. The Cytoplasmic segment spans residues 56 to 65 (WIIIAHKRMR). A helical transmembrane segment spans residues 66–87 (TVTNYFLVNLAFAEASMSAFNT). Residues 88–107 (VINFTYAIHNHWYYGLIYCK) lie on the Extracellular side of the membrane. Cys-106 and Cys-181 are joined by a disulfide. Residues 108–129 (FHNFFPISAVFTSIYSMTAIAL) form a helical membrane-spanning segment. The Cytoplasmic portion of the chain corresponds to 130 to 149 (DRYMAIIHPLKPRLSATATK). The chain crosses the membrane as a helical span at residues 150-170 (IVICVIWSFSFCMAFPLGYYA). Residues 171–196 (DVYPMEGGDICYLNWPDSEENRKYEQ) lie on the Extracellular side of the membrane. Residues 197 to 221 (VYQVLVFCLIYILPLLVIGCAYTFI) traverse the membrane as a helical segment. Residues 222 to 250 (GMTLWASEIPGDSSDRYHEQVVAKRKVVK) lie on the Cytoplasmic side of the membrane. A helical transmembrane segment spans residues 251 to 272 (MMIVVVCTFAICWLPFHIFFLL). Residues 273–283 (QTLHEMTQKFY) lie on the Extracellular side of the membrane. Residues 284–308 (QQFYLAIMWLAMSSTMYNPIIYCCL) form a helical membrane-spanning segment. The Cytoplasmic segment spans residues 309-408 (NDRFRIGFKH…SSSFYSNNLA (100 aa)). Residue Cys-323 is the site of S-palmitoyl cysteine attachment. The interval 366-408 (DEEAEENGKSSKRLSLDLTSNGSSRSVCKTMSDSSSFYSNNLA) is disordered. The span at 382 to 408 (DLTSNGSSRSVCKTMSDSSSFYSNNLA) shows a compositional bias: polar residues.

Belongs to the G-protein coupled receptor 1 family.

It localises to the cell membrane. This is a receptor for the tachykinin neuropeptide substance P. It is probably associated with G proteins that activate a phosphatidylinositol-calcium second messenger system. This is Substance-P receptor (TACR1) from Aquarana catesbeiana (American bullfrog).